A 91-amino-acid polypeptide reads, in one-letter code: Preprofallaxidin-2 (91 aa).

Residues 1-22 form the signal peptide; it reads MASLKKSLFLVLFLGLVSLSIC. Residues 23 to 49 constitute a propeptide that is removed on maturation; that stretch reads EKEKRENEGNENEEEEENHEEGSEEKR. The disordered stretch occupies residues 24–49; the sequence is KEKRENEGNENEEEEENHEEGSEEKR. Over residues 31 to 41 the composition is skewed to acidic residues; sequence GNENEEEEENH. Leucine 65 carries the leucine amide modification. A propeptide spanning residues 69–73 is cleaved from the precursor; sequence SEEKR. The residue at position 89 (leucine 89) is a Leucine amide.

Belongs to the frog skin active peptide (FSAP) family. Dermaseptin subfamily. In terms of tissue distribution, expressed by the skin glands.

It localises to the secreted. Its function is as follows. Fallaxidin-3.1 shows antibacterial activity against the Gram-positive bacteria E.faecalis (MIC=100 uM) and L.lactis (MIC=100 uM). No antibacterial activity against the Gram-positive bacteria B.cereus, L.innocua, M.luteus, S.epidermidis, S.uberis and S.aureus, or the Gram-negative bacteria E.cloacae and E.coli. Fallaxidin-3.2 shows antibacterial activity against the Gram-positive bacteria E.faecalis (MIC=100 uM) and L.lactis (MIC=500 uM). No antibacterial activity against the Gram-positive bacteria B.cereus, L.innocua, M.luteus, S.epidermidis, S.uberis and S.aureus, or the Gram-negative bacteria E.cloacae and E.coli. The polypeptide is Preprofallaxidin-2 (Litoria fallax (Eastern dwarf tree frog)).